Here is a 260-residue protein sequence, read N- to C-terminus: MNTGHGTGQQIHPIVRVPFSAGVPLIEATFAARSGQFLVEAQMGGRMVRAHVADRGRLVDLLVPGARLLLAPREEVGRKTAFQVVAVYQDSDLVSLDTQLPNRLVAAALSLRALPQFARYGTVQREVQLGPHRIDFRLSEGLDTCLLEVKSVTRVIDGVAVFPDAPTERGSQHLELLTNAARNGQRAAVVFIIQRSQGVAFAPDETIDRAFSRALRTARALGVEIYAYLCPVTPTGITLGHEVPVFMSLSAVPSELRRRL.

Belongs to the SfsA family.

The sequence is that of Sugar fermentation stimulation protein homolog from Chloroflexus aggregans (strain MD-66 / DSM 9485).